A 121-amino-acid polypeptide reads, in one-letter code: uncharacterized protein (121 aa).

Residues 1-121 (MGQVLSICSS…QQEREQIKWD (121 aa)) are disordered. A lipid anchor (N-myristoyl glycine) is attached at Gly-2. A lipid anchor (S-palmitoyl cysteine) is attached at Cys-8. 4 stretches are compositionally biased toward basic and acidic residues: residues 11–23 (KSKE…EKPT), 73–83 (AAEKRNIEKKK), 90–105 (RQLE…EHLQ), and 112–121 (QQEREQIKWD).

It to yeast YGL108C. Myristoylated. In terms of processing, the N-myristoylated protein is further palmitoylated.

The protein resides in the cytoplasm. It is found in the cytosol. This is an uncharacterized protein from Schizosaccharomyces pombe (strain 972 / ATCC 24843) (Fission yeast).